Consider the following 1241-residue polypeptide: ATP-dependent helicase/nuclease subunit A (1241 aa).

The 474-residue stretch at serine 12 to arginine 485 folds into the UvrD-like helicase ATP-binding domain. Alanine 33 to threonine 40 serves as a coordination point for ATP. The UvrD-like helicase C-terminal domain maps to glycine 505–glycine 805.

This sequence belongs to the helicase family. AddA subfamily. As to quaternary structure, heterodimer of AddA and AddB/RexB. Mg(2+) is required as a cofactor.

It catalyses the reaction Couples ATP hydrolysis with the unwinding of duplex DNA by translocating in the 3'-5' direction.. The enzyme catalyses ATP + H2O = ADP + phosphate + H(+). Functionally, the heterodimer acts as both an ATP-dependent DNA helicase and an ATP-dependent, dual-direction single-stranded exonuclease. Recognizes the chi site generating a DNA molecule suitable for the initiation of homologous recombination. The AddA nuclease domain is required for chi fragment generation; this subunit has the helicase and 3' -&gt; 5' nuclease activities. This Bacillus mycoides (strain KBAB4) (Bacillus weihenstephanensis) protein is ATP-dependent helicase/nuclease subunit A.